A 423-amino-acid polypeptide reads, in one-letter code: MKTIRIIGAGLSGCEAAYYLLKKGYFVELYEIKTIKKNPIQHYDYFCELAYSDSFRSTDLNTSVGTLKKELELLDSLIIKAARYASINQNNELVVNRIEFSKYITNYLKTFNNLKIIEQEYLNIDLNIPTIIAIGPISTPNFLTNLKKLINKENLKLFDTVEPTILKQSINMDICYSLDNNLNYLYCDLNKEQFEKFYNALISAKTFNSPLKNEIELLEKNNYFSIESLAKNKQEFINHFKPINNNAYITITLKKDSVINNLYTIVNFQTNLMWNEQLKVFSLIPGLENLKIMKYGVMHKNNYINTKKLLNLGVQLKTNKNIFFAGQIIGVDGYVESVCSGLISAINLDRYLNNKKMIIPNKNSTIGSLYNYLLKTDSNFSPMRINWALVDMIGGFELSDNSKKIYSKRAIKLIKQYLKKINT.

An FAD-binding site is contributed by 8–13 (GAGLSG).

The protein belongs to the MnmG family. TrmFO subfamily. Requires FAD as cofactor.

The protein localises to the cytoplasm. It carries out the reaction uridine(54) in tRNA + (6R)-5,10-methylene-5,6,7,8-tetrahydrofolate + NADH + H(+) = 5-methyluridine(54) in tRNA + (6S)-5,6,7,8-tetrahydrofolate + NAD(+). It catalyses the reaction uridine(54) in tRNA + (6R)-5,10-methylene-5,6,7,8-tetrahydrofolate + NADPH + H(+) = 5-methyluridine(54) in tRNA + (6S)-5,6,7,8-tetrahydrofolate + NADP(+). In terms of biological role, catalyzes the folate-dependent formation of 5-methyl-uridine at position 54 (M-5-U54) in all tRNAs. The polypeptide is Methylenetetrahydrofolate--tRNA-(uracil-5-)-methyltransferase TrmFO 2 (Mycoplasma capricolum subsp. capricolum (strain California kid / ATCC 27343 / NCTC 10154)).